The sequence spans 739 residues: Alcohol dehydrogenase (quinone), dehydrogenase subunit (739 aa).

A signal peptide spans 1 to 35 (MISAVFGKRRSLSRTLTAGTICAALISGYATMASA). Glu97 is a pyrroloquinoline quinone binding site. Cys143 and Cys144 are disulfide-bonded. Arg149 provides a ligand contact to pyrroloquinoline quinone. Ca(2+) is bound at residue Glu217. Pyrroloquinoline quinone is bound at residue Thr279. Ca(2+) is bound by residues Asn299 and Asp344. Asp344 serves as the catalytic Proton acceptor. Pyrroloquinoline quinone contacts are provided by Lys371 and Ile585. The region spanning 635-739 (FDSKRTDNGY…NADGIPEQLP (105 aa)) is the Cytochrome c domain. Heme c contacts are provided by Cys651, Cys654, His655, and Met694.

This sequence belongs to the bacterial PQQ dehydrogenase family. As to quaternary structure, the alcohol dehydrogenase multicomponent enzyme system is composed of a dehydrogenase subunit I (AdhA) and a cytochrome c subunit II (AdhB). The cofactor is pyrroloquinoline quinone. It depends on Ca(2+) as a cofactor. Requires heme c as cofactor.

It localises to the cell membrane. It carries out the reaction ethanol + a ubiquinone = a ubiquinol + acetaldehyde. Functionally, dehydrogenase component of the alcohol dehydrogenase multicomponent enzyme system which is involved in the production of acetic acid and in the ethanol oxidase respiratory chain. Quinohemoprotein alcohol dehydrogenase (ADH) catalyzes the oxidation of ethanol to acetaldehyde by transferring electrons to the ubiquinone embedded in the membrane phospholipids. The electrons transfer from ethanol to membranous ubiquinone occurs from pyrroloquinoline quinone (PQQ) to one heme c in subunit I (AdhA), and finally to two heme c in subunit II (AdhB). Besides ubiquinone reduction, ADH also has a ubiquinol (QH2) oxidation reaction which mediates electron transfer from ubiquinol to the non-energy generating bypass oxidase system. The electrons transfer occurs from ubiquinol (QH2) to the additional heme c within subunit II (AdhB). This Komagataeibacter europaeus (Gluconacetobacter europaeus) protein is Alcohol dehydrogenase (quinone), dehydrogenase subunit.